Reading from the N-terminus, the 505-residue chain is RNA-splicing ligase RtcB homolog (505 aa).

Residues Asp-119, Cys-122, His-227, His-259, and His-353 each contribute to the Mn(2+) site. 226–230 (NHYAE) is a GMP binding site. GMP-binding positions include 353 to 354 (HN), 402 to 405 (GGTM), Ser-409, 428 to 431 (HGAG), and Lys-504. The active-site GMP-histidine intermediate is His-428.

The protein belongs to the RtcB family. As to quaternary structure, catalytic component of the tRNA-splicing ligase complex. Mn(2+) is required as a cofactor.

Its subcellular location is the nucleus. The protein resides in the cytoplasm. It catalyses the reaction a 3'-end 3'-phospho-ribonucleotide-RNA + a 5'-end dephospho-ribonucleoside-RNA + GTP = a ribonucleotidyl-ribonucleotide-RNA + GMP + diphosphate. The catalysed reaction is a 3'-end 2',3'-cyclophospho-ribonucleotide-RNA + a 5'-end dephospho-ribonucleoside-RNA + GTP + H2O = a ribonucleotidyl-ribonucleotide-RNA + GMP + diphosphate + H(+). Its function is as follows. Catalytic subunit of the tRNA-splicing ligase complex that acts by directly joining spliced tRNA halves to mature-sized tRNAs by incorporating the precursor-derived splice junction phosphate into the mature tRNA as a canonical 3',5'-phosphodiester. May act as an RNA ligase with broad substrate specificity, and may function toward other RNAs. The sequence is that of RNA-splicing ligase RtcB homolog from Xenopus tropicalis (Western clawed frog).